Reading from the N-terminus, the 515-residue chain is Forkhead box protein H1 (515 aa).

Residues 55–103 are disordered; that stretch reads YREGGTWSPDRGSMHGLSPGTQEGSCTQAEGTKDSLGGDETLSRKSKKK. Over residues 73–84 the composition is skewed to polar residues; that stretch reads PGTQEGSCTQAE. The fork-head DNA-binding region spans 110 to 206; sequence KPPYSYLAMI…MKLQNTALTR (97 aa). The disordered stretch occupies residues 307 to 399; that stretch reads YPQSKPTRNG…EPPKKMPLLS (93 aa). Over residues 322 to 339 the composition is skewed to low complexity; the sequence is SASHSTYSSSSSSISTIS. A compositionally biased stretch (polar residues) spans 375–388; it reads STPSSDTDAGNYSP. Residues 377-503 are SMAD-interaction domain (SID); that stretch reads PSSDTDAGNY…PSFLGQCLGS (127 aa). Positions 402–406 match the Fast/FoxH1 motif 1 (FM1) motif; the sequence is LPTSY. The Fast/FoxH1 motif 2 (FM2) signature appears at 412–418; it reads PNVVAPP. The short motif at 467–488 is the SMAD-interaction motif (SIM) element; the sequence is LDNMLKTVPPNKSVFDVLTSHP.

In terms of assembly, ARF1 contains 2 smad2s, 1 smad4 and 1 foxh1/fast-1 protein. Interaction with smad4 is most likely indirect through interaction with the MH2 domain of smad2. Binds to the MH2 domain of smad3, which can incorporate into the ARF1 complex. The ARF1 and ARF2 complexes are activated by distinct TGF-beta family members; formation of ARF1 is promoted by activin. Interacts (via Fork-head domain) with gtf2ird1/wbscr11 (via repeats 4-5).

It is found in the nucleus. Its function is as follows. Transcriptional activator. Recognizes and binds to the DNA sequence 5'-TGT[GT][GT]ATT-3'. Upon TGF-beta induction, forms a transcriptionally active complex with smad2 and smad4 called activin-responsive factor 1 (ARF1), which binds a site on the mix-B/mix.2 promoter called the activin response element (ARE). Binds to activated smads and the ARE with much lower affinity than fast3. Necessary for the first steps in mesoderm specification, directly inducing mesodermal genes. Acts with fast3 to control the convergent extension movements of gastrulation. Binds to the proximal element (PE) of the gsc gene and cooperates with gtf2ird1/wbscr11 and SMAD proteins to regulate gsc transcription. The polypeptide is Forkhead box protein H1 (Xenopus tropicalis (Western clawed frog)).